Reading from the N-terminus, the 182-residue chain is Shikimate kinase (182 aa).

14-19 (GAGKTT) serves as a coordination point for ATP. Residue Thr18 coordinates Mg(2+). Substrate contacts are provided by Asp36, Arg60, and Gly84. Arg122 lines the ATP pocket. Arg141 contributes to the substrate binding site.

Belongs to the shikimate kinase family. As to quaternary structure, monomer. Mg(2+) serves as cofactor.

The protein resides in the cytoplasm. The enzyme catalyses shikimate + ATP = 3-phosphoshikimate + ADP + H(+). Its pathway is metabolic intermediate biosynthesis; chorismate biosynthesis; chorismate from D-erythrose 4-phosphate and phosphoenolpyruvate: step 5/7. Its function is as follows. Catalyzes the specific phosphorylation of the 3-hydroxyl group of shikimic acid using ATP as a cosubstrate. This is Shikimate kinase from Marinomonas sp. (strain MWYL1).